We begin with the raw amino-acid sequence, 650 residues long: Chaperone protein DnaK (650 aa).

Phosphothreonine; by autocatalysis is present on Thr200. The tract at residues 614 to 635 (AGAAGAAGAAEGAAHAGGAQQA) is disordered.

The protein belongs to the heat shock protein 70 family.

In terms of biological role, acts as a chaperone. This chain is Chaperone protein DnaK, found in Burkholderia lata (strain ATCC 17760 / DSM 23089 / LMG 22485 / NCIMB 9086 / R18194 / 383).